Reading from the N-terminus, the 162-residue chain is Transmembrane protein 92 (162 aa).

The N-terminal stretch at 1–22 (MLDTWVWGTLTLTFGLLSSLQG) is a signal peptide. Residues 23–63 (VSFNETANTCDILNCPKGFTCCVKECCPERKVWDPANDRFR) are Extracellular-facing. The helical transmembrane segment at 64–84 (FLVILACIIFPILFICALVSL) threads the bilayer. Residues 85–162 (FCPNCTELQH…QMRGRAYATL (78 aa)) are Cytoplasmic-facing. The tract at residues 134–162 (TPPTEPPPPYSLRPEGPAGQMRGRAYATL) is disordered.

The protein localises to the membrane. In Mus musculus (Mouse), this protein is Transmembrane protein 92 (Tmem92).